The following is a 236-amino-acid chain: 5'-methylthioadenosine/S-adenosylhomocysteine nucleosidase (236 aa).

Glu12 functions as the Proton acceptor in the catalytic mechanism. Residues Gly78, Ile153, and 174 to 175 (ME) contribute to the substrate site. Asp198 (proton donor) is an active-site residue.

Belongs to the PNP/UDP phosphorylase family. MtnN subfamily.

The catalysed reaction is S-adenosyl-L-homocysteine + H2O = S-(5-deoxy-D-ribos-5-yl)-L-homocysteine + adenine. It carries out the reaction S-methyl-5'-thioadenosine + H2O = 5-(methylsulfanyl)-D-ribose + adenine. The enzyme catalyses 5'-deoxyadenosine + H2O = 5-deoxy-D-ribose + adenine. It participates in amino-acid biosynthesis; L-methionine biosynthesis via salvage pathway; S-methyl-5-thio-alpha-D-ribose 1-phosphate from S-methyl-5'-thioadenosine (hydrolase route): step 1/2. In terms of biological role, catalyzes the irreversible cleavage of the glycosidic bond in both 5'-methylthioadenosine (MTA) and S-adenosylhomocysteine (SAH/AdoHcy) to adenine and the corresponding thioribose, 5'-methylthioribose and S-ribosylhomocysteine, respectively. Also cleaves 5'-deoxyadenosine, a toxic by-product of radical S-adenosylmethionine (SAM) enzymes, into 5-deoxyribose and adenine. This chain is 5'-methylthioadenosine/S-adenosylhomocysteine nucleosidase, found in Shewanella oneidensis (strain ATCC 700550 / JCM 31522 / CIP 106686 / LMG 19005 / NCIMB 14063 / MR-1).